The chain runs to 339 residues: Dihydroorotase (339 aa).

Zn(2+) is bound by residues histidine 12 and histidine 14. Residues 14–16 (HVR) and asparagine 40 contribute to the substrate site. Residues lysine 94, histidine 133, histidine 167, and aspartate 239 each contribute to the Zn(2+) site. Lysine 94 carries the N6-carboxylysine modification. Residue histidine 133 participates in substrate binding. The active site involves aspartate 239. 2 residues coordinate substrate: histidine 243 and alanine 255.

This sequence belongs to the metallo-dependent hydrolases superfamily. DHOase family. Class II DHOase subfamily. In terms of assembly, homodimer. It depends on Zn(2+) as a cofactor.

The catalysed reaction is (S)-dihydroorotate + H2O = N-carbamoyl-L-aspartate + H(+). It functions in the pathway pyrimidine metabolism; UMP biosynthesis via de novo pathway; (S)-dihydroorotate from bicarbonate: step 3/3. Its function is as follows. Catalyzes the reversible cyclization of carbamoyl aspartate to dihydroorotate. The polypeptide is Dihydroorotase (Helicobacter pylori (strain P12)).